The following is a 193-amino-acid chain: Nucleoside triphosphate pyrophosphatase (193 aa).

Residue D69 is the Proton acceptor of the active site.

It belongs to the Maf family. A divalent metal cation is required as a cofactor.

Its subcellular location is the cytoplasm. It catalyses the reaction a ribonucleoside 5'-triphosphate + H2O = a ribonucleoside 5'-phosphate + diphosphate + H(+). The enzyme catalyses a 2'-deoxyribonucleoside 5'-triphosphate + H2O = a 2'-deoxyribonucleoside 5'-phosphate + diphosphate + H(+). Functionally, nucleoside triphosphate pyrophosphatase. May have a dual role in cell division arrest and in preventing the incorporation of modified nucleotides into cellular nucleic acids. The chain is Nucleoside triphosphate pyrophosphatase from Parasynechococcus marenigrum (strain WH8102).